The primary structure comprises 479 residues: Cardiolipin synthase A (479 aa).

2 helical membrane passes run 8 to 28 (FFGY…LHAV) and 38 to 58 (IAWA…YLVF). PLD phosphodiesterase domains follow at residues 218 to 245 (VNFR…GDEY) and 392 to 419 (QPGF…DNRS). Residues His-223, Lys-225, Asp-230, His-397, Lys-399, and Asp-404 contribute to the active site.

This sequence belongs to the phospholipase D family. Cardiolipin synthase subfamily. ClsA sub-subfamily.

The protein resides in the cell inner membrane. It carries out the reaction 2 a 1,2-diacyl-sn-glycero-3-phospho-(1'-sn-glycerol) = a cardiolipin + glycerol. In terms of biological role, catalyzes the reversible phosphatidyl group transfer from one phosphatidylglycerol molecule to another to form cardiolipin (CL) (diphosphatidylglycerol) and glycerol. The protein is Cardiolipin synthase A of Pseudomonas putida (strain GB-1).